The chain runs to 291 residues: Transmembrane protein 41B (291 aa).

The disordered stretch occupies residues 1 to 38 (MAKGRVAERSQMGADHTTPVGDGAAGTRGPAAPGSRDY). Thr-18 carries the post-translational modification Phosphothreonine. A compositionally biased stretch (low complexity) spans 21 to 34 (GDGAAGTRGPAAPG). Ser-35 is modified (phosphoserine). Helical transmembrane passes span 52–72 (MSLLILVSIFLSAAFVMFLVY), 109–129 (FYVQVLVAYFATYIFLQTFAI), 147–169 (LALFLVCLCSGLGASFCYMLSYL), 197–217 (LINYIIFLRITPFLPNWFINI), 225–245 (PLKVFFIGTFLGVAPPSFVAI), and 262–282 (SWNSIFILMILAVLSILPAIF). Residues 140–251 (GFLYPFPLAL…FVAIKAGTTL (112 aa)) are VTT domain; required for its function in autophagy.

It belongs to the TMEM41 family. In terms of assembly, interacts with VMP1. Interacts with COPA, COPB1, VDAC1 and ERLIN2. Interacts with ATG2A. Interacts with SURF4.

It localises to the endoplasmic reticulum membrane. It is found in the endomembrane system. The catalysed reaction is a 1,2-diacyl-sn-glycero-3-phospho-L-serine(in) = a 1,2-diacyl-sn-glycero-3-phospho-L-serine(out). The enzyme catalyses cholesterol(in) = cholesterol(out). It carries out the reaction a 1,2-diacyl-sn-glycero-3-phosphocholine(in) = a 1,2-diacyl-sn-glycero-3-phosphocholine(out). It catalyses the reaction a 1,2-diacyl-sn-glycero-3-phosphoethanolamine(in) = a 1,2-diacyl-sn-glycero-3-phosphoethanolamine(out). Its function is as follows. Phospholipid scramblase involved in lipid homeostasis and membrane dynamics processes. Has phospholipid scramblase activity toward cholesterol and phosphatidylserine, as well as phosphatidylethanolamine and phosphatidylcholine. Required for autophagosome formation: participates in early stages of autophagosome biogenesis at the endoplasmic reticulum (ER) membrane by reequilibrating the leaflets of the ER as lipids are extracted by ATG2 (ATG2A or ATG2B) to mediate autophagosome assembly. In addition to autophagy, involved in other processes in which phospholipid scramblase activity is required. Required for normal motor neuron development. This Pongo abelii (Sumatran orangutan) protein is Transmembrane protein 41B.